The sequence spans 555 residues: Protein NRT1/ PTR FAMILY 5.12 (555 aa).

2 consecutive transmembrane segments (helical) span residues phenylalanine 53–serine 73 and leucine 83–leucine 103. A Phosphothreonine modification is found at threonine 108. 10 consecutive transmembrane segments (helical) span residues isoleucine 109–isoleucine 129, valine 148–cysteine 168, serine 190–threonine 210, leucine 221–isoleucine 241, alanine 315–glutamine 335, valine 357–tyrosine 377, isoleucine 401–lysine 421, valine 443–glycine 463, alanine 482–isoleucine 502, and tyrosine 526–alanine 546.

Belongs to the major facilitator superfamily. Proton-dependent oligopeptide transporter (POT/PTR) (TC 2.A.17) family. In terms of tissue distribution, expressed in shoots and roots.

It is found in the membrane. The protein is Protein NRT1/ PTR FAMILY 5.12 (NPF5.12) of Arabidopsis thaliana (Mouse-ear cress).